Reading from the N-terminus, the 539-residue chain is Nucleoporin NUP60 (539 aa).

Phosphoserine is present on residues Ser10, Ser49, Ser81, and Ser89. The segment at 44 to 80 (DSARVSPRNNVANKQPRNESFNRRISSMPGGYFHSEI) is disordered. Residues 91 to 118 (VVSAVGEARNDIENKEEEYDETHETNIS) are a coiled coil. Residues Ser162, Ser171, Ser214, and Ser222 each carry the phosphoserine modification. Composition is skewed to polar residues over residues 242 to 252 (TANTSAQSIAS) and 258 to 267 (SGVSKSAPSK). Disordered stretches follow at residues 242 to 267 (TANTSAQSIASAKSVRSGVSKSAPSK), 305 to 329 (IRKHKRVSPNAAPRQEISEEETTVK), and 347 to 493 (NATK…GKHI). A compositionally biased stretch (polar residues) spans 347-359 (NATKISPSAPSKD). 4 positions are modified to phosphoserine: Ser352, Ser360, Ser374, and Ser382. Polar residues-rich tracts occupy residues 395–433 (SAFNFSFNTSRNVEPTENAYKSENAPSASSKEFNFTNLQ) and 448–485 (GDSTPVQPDLSVTPQKSSSKGFVFNSVQKKSRSNLSQE). FXF repeat units follow at residues 399–401 (FSF) and 427–429 (FNF). Thr460 carries the post-translational modification Phosphothreonine. The FXF 3 repeat unit spans residues 469–471 (FVF). Phosphoserine occurs at positions 480 and 483. The stretch at 509-511 (FDF) is one FXF 4 repeat.

As to quaternary structure, component of the nuclear pore complex (NPC). NPC constitutes the exclusive means of nucleocytoplasmic transport. NPCs allow the passive diffusion of ions and small molecules and the active, nuclear transport receptor-mediated bidirectional transport of macromolecules such as proteins, RNAs, ribonucleoparticles (RNPs), and ribosomal subunits across the nuclear envelope. Due to its 8-fold rotational symmetry, all subunits are present with 8 copies or multiples thereof. Binds to NUP1 and NUP2 forming the nuclear basket and the distal ring. The interaction with NUP2 is GSP1-GTP-dependent. Interacts through its FG repeats with karyopherins, such as KAP123 and KAP95-SRP1 (KAP60). Also interacts with GSP1-GTP and SRM1 (PRP20), where NUP60 reduces SRM1 activity, thus inhibiting GSP1 guanine nucleotide dissociation. Phosphorylated by CDC28.

It is found in the nucleus. The protein resides in the nuclear pore complex. The protein localises to the nucleus membrane. Functions as a component of the nuclear pore complex (NPC). NPC components, collectively referred to as nucleoporins (NUPs), can play the role of both NPC structural components and of docking or interaction partners for transiently associated nuclear transport factors. Active directional transport is assured by both, a Phe-Gly (FG) repeat affinity gradient for these transport factors across the NPC and a transport cofactor concentration gradient across the nuclear envelope (GSP1 and GSP2 GTPases associated predominantly with GTP in the nucleus, with GDP in the cytoplasm). In Saccharomyces cerevisiae (strain ATCC 204508 / S288c) (Baker's yeast), this protein is Nucleoporin NUP60 (NUP60).